A 787-amino-acid chain; its full sequence is Putative pentatricopeptide repeat-containing protein At1g69350, mitochondrial (787 aa).

The transit peptide at 1-16 directs the protein to the mitochondrion; the sequence is MTQYMPLFRSCSSLRL. 19 PPR repeats span residues 33-63, 64-98, 99-134, 135-165, 166-200, 201-235, 236-266, 267-301, 302-336, 338-368, 369-403, 404-434, 438-468, 469-503, 504-534, 538-568, 569-603, 604-638, and 639-669; these read DPLP…FPYP, DSFM…TTQI, SKFV…GVDD, DAVI…MPVR, DLVA…GVEP, DAVT…MFDL, DETL…IAKK, NAVS…GIEP, NLVT…ELDP, YESL…VSDR, NIVA…RIKP, DAFT…VIRT, DEFV…IKHR, SVVT…YLEM, NEVT…LIIS, DLFT…MSSR, SIVS…GTKP, NEVV…GVSP, and NSEH…MPFL. The segment at 674–749 is type E motif; the sequence is VWGSLVNGCR…VPGYSAIEID (76 aa). Residues 750 to 780 are type E(+) motif; that stretch reads QKVFRFGAGEENRIQTDEIYRFLGNLQNLTN.

This sequence belongs to the PPR family. PCMP-E subfamily.

The protein resides in the mitochondrion. In Arabidopsis thaliana (Mouse-ear cress), this protein is Putative pentatricopeptide repeat-containing protein At1g69350, mitochondrial (PCMP-E66).